The following is a 342-amino-acid chain: S-adenosylmethionine:tRNA ribosyltransferase-isomerase (342 aa).

This sequence belongs to the QueA family. Monomer.

The protein localises to the cytoplasm. It catalyses the reaction 7-aminomethyl-7-carbaguanosine(34) in tRNA + S-adenosyl-L-methionine = epoxyqueuosine(34) in tRNA + adenine + L-methionine + 2 H(+). The protein operates within tRNA modification; tRNA-queuosine biosynthesis. In terms of biological role, transfers and isomerizes the ribose moiety from AdoMet to the 7-aminomethyl group of 7-deazaguanine (preQ1-tRNA) to give epoxyqueuosine (oQ-tRNA). This chain is S-adenosylmethionine:tRNA ribosyltransferase-isomerase, found in Streptococcus pyogenes serotype M6 (strain ATCC BAA-946 / MGAS10394).